The following is a 231-amino-acid chain: Orotate phosphoribosyltransferase (231 aa).

5-phospho-alpha-D-ribose 1-diphosphate contacts are provided by residues Lys27, 79-80, Arg106, Lys107, Lys110, His112, and 133-141; these read YK and DDVMTAGTA. Positions 137 and 166 each coordinate orotate.

Belongs to the purine/pyrimidine phosphoribosyltransferase family. PyrE subfamily. In terms of assembly, homodimer. Mg(2+) is required as a cofactor.

The enzyme catalyses orotidine 5'-phosphate + diphosphate = orotate + 5-phospho-alpha-D-ribose 1-diphosphate. Its pathway is pyrimidine metabolism; UMP biosynthesis via de novo pathway; UMP from orotate: step 1/2. Its function is as follows. Catalyzes the transfer of a ribosyl phosphate group from 5-phosphoribose 1-diphosphate to orotate, leading to the formation of orotidine monophosphate (OMP). This chain is Orotate phosphoribosyltransferase, found in Bifidobacterium animalis subsp. lactis (strain AD011).